Reading from the N-terminus, the 203-residue chain is Small ribosomal subunit protein uS4 (203 aa).

Residues 93 to 156 form the S4 RNA-binding domain; it reads RRLDNVVYRL…AKVPAILEAV (64 aa).

It belongs to the universal ribosomal protein uS4 family. As to quaternary structure, part of the 30S ribosomal subunit. Contacts protein S5. The interaction surface between S4 and S5 is involved in control of translational fidelity.

In terms of biological role, one of the primary rRNA binding proteins, it binds directly to 16S rRNA where it nucleates assembly of the body of the 30S subunit. Its function is as follows. With S5 and S12 plays an important role in translational accuracy. The chain is Small ribosomal subunit protein uS4 from Streptococcus thermophilus (strain CNRZ 1066).